The sequence spans 138 residues: MLTDPIADMLTRIRNATRVYKESTEVPASRFKEEILKILAREGFIKGYERVEVDGKPYLRIHLKYGPRRQGPDPRPEQVIKHIRRISRPGRRVYVGVKEIPRVRRGLGIAILSTPKGVLTDREARKLGVGGELICEVW.

It belongs to the universal ribosomal protein uS8 family. As to quaternary structure, part of the 30S ribosomal subunit. Contacts proteins S5 and S12.

In terms of biological role, one of the primary rRNA binding proteins, it binds directly to 16S rRNA central domain where it helps coordinate assembly of the platform of the 30S subunit. This chain is Small ribosomal subunit protein uS8, found in Thermus aquaticus.